The sequence spans 866 residues: MSLLKKLASLAPAHPSHGDVERREIAAPTLVGNAEYLKLVDVHWNSSQQIMGLDSKTVGPQERCKILMYHLNEIVSVLAEEKEECPGPCLKYVLDENIFEIVFMWGTSSYVNELMKREQIKVFRNLIERSKAPILIYEQVWKPLLCLLHSCASTKLPSDMEEDYVAVLKGLCVSANRDIVLLDLFFLENHNHSEISGFSVFSLLIPYVHREGDLGVWARDAMLLSMALSSIDARLGSYIVEETNFCPILAIGLSGLFSDLPTSLDIPSEDWYSLERGLWATFPELVAFLTSLEFCNNVIQIAHHKVQHMLLELIYHGFLVSVMSSALTQSSVEALTAVTAYLDLFVRSITDSKLMQVFVKFLLVEKSDGVPILDSLVARIGQESQLAVVSLGLIHTLLDLNCEDILYTLVLKYLIPCTHILSSQRRTVREVDYYSKSAAKFLSLIPSCCHGLSTCLASSRPESPSCLSSTESLNKSIEVKIDMKTSHDFVKYRPQPHVHGGEATLADYLEYLADARQAIRNCQLRCSCWSMQYDGTDLSSTDDATENNPANKRRSLVLANGSIPRSASEVSSTLAVKASDKTKRSLSSNDLCLPSAEEGLGPFLSTLFRKLENMAQNTFYVNLILTAVITRLCYYPQPLLKSFLLNYNIVLKPGVRSLFQILSSIKIKVENVVESVEGLHKLLRRARNNLILREEKSKASIQSVVADVPIPTRESIASPTTQKRLARQKTDTFLAVRIRDGPPPSLMRAHSIGSIGSASTSSSLSLTDSIESLGNLSPQFGSTADISEDASPVSQAPETTGRPRASAVVRESQTQLKRNTFRRKNPKAVKNAVYCIVMLEEWLKELAAISQEHALLPLVPQEMQDV.

Disordered regions lie at residues 739–761 (RDGP…ASTS) and 781–814 (GSTA…ESQT). A compositionally biased stretch (low complexity) spans 751 to 761 (SIGSIGSASTS).

This sequence belongs to the FHIP family.

This Nematostella vectensis (Starlet sea anemone) protein is FHIP family protein v1g243165.